Reading from the N-terminus, the 909-residue chain is Protein translocase subunit SecA (909 aa).

ATP contacts are provided by residues Q85, 103–107 (GEGKT), and D512. The segment at 866–899 (HETSATGGEEEINKPVVKGKKIGRNDPCPCGSGK) is disordered. Zn(2+)-binding residues include C893, C895, C904, and C905.

It belongs to the SecA family. As to quaternary structure, monomer and homodimer. Part of the essential Sec protein translocation apparatus which comprises SecA, SecYEG and auxiliary proteins SecDF. Other proteins may also be involved. Zn(2+) is required as a cofactor.

It is found in the cell membrane. The protein localises to the cytoplasm. It carries out the reaction ATP + H2O + cellular proteinSide 1 = ADP + phosphate + cellular proteinSide 2.. Part of the Sec protein translocase complex. Interacts with the SecYEG preprotein conducting channel. Has a central role in coupling the hydrolysis of ATP to the transfer of proteins into and across the cell membrane, serving as an ATP-driven molecular motor driving the stepwise translocation of polypeptide chains across the membrane. This is Protein translocase subunit SecA from Finegoldia magna (strain ATCC 29328 / DSM 20472 / WAL 2508) (Peptostreptococcus magnus).